A 268-amino-acid polypeptide reads, in one-letter code: MLTSNKNTLFNSIFAFKPKKRKNVFIFLHGFGSEYASFSRIFSLFKKKKWPFFTFNFPGHGDNESTDTDQLKLNHFVDLVCDFIVQKKLNNVILIGHSMGGAVAVLVNKVIPLKIKALILVAPMNQTSFSVNKKRILDTFFKRNNSNHKDFVEHEEKRKSLLKIAINAFKKRTTFKTLYSDMVQNAKYGNDSLERAYEMIGNKPTLVILGANDIVTPTKASVDYLANKSDKIIFKVIDGVGHSPHDSAPKLFFDYVLEFLDNLKKQRY.

His29 is an active-site residue. Ser98 acts as the Charge relay system in catalysis.

This sequence belongs to the lipase/esterase LIP3/BchO family.

The polypeptide is Putative esterase/lipase 2 (Mycoplasma genitalium (strain ATCC 33530 / DSM 19775 / NCTC 10195 / G37) (Mycoplasmoides genitalium)).